Reading from the N-terminus, the 113-residue chain is UPF0212 protein MmarC6_1165 (113 aa).

It belongs to the UPF0212 family.

This is UPF0212 protein MmarC6_1165 from Methanococcus maripaludis (strain C6 / ATCC BAA-1332).